A 254-amino-acid polypeptide reads, in one-letter code: Small ribosomal subunit protein uS2 (254 aa).

The protein belongs to the universal ribosomal protein uS2 family.

This is Small ribosomal subunit protein uS2 from Borrelia hermsii (strain HS1 / DAH).